The following is a 106-amino-acid chain: UPF0145 protein MA_3383 (106 aa).

It belongs to the UPF0145 family.

The chain is UPF0145 protein MA_3383 from Methanosarcina acetivorans (strain ATCC 35395 / DSM 2834 / JCM 12185 / C2A).